The primary structure comprises 448 residues: tRNA modification GTPase MnmE (448 aa).

(6S)-5-formyl-5,6,7,8-tetrahydrofolate-binding residues include R24, E81, and K120. The TrmE-type G domain maps to 216–373 (GLNVVLVGAP…LKRTLLREAG (158 aa)). N226 lines the K(+) pocket. Residues 226 to 231 (NVGKSS), 245 to 251 (TDIAGTT), and 270 to 273 (DTAG) each bind GTP. Mg(2+) is bound at residue S230. Residues T245, I247, and T250 each contribute to the K(+) site. A Mg(2+)-binding site is contributed by T251. K448 contributes to the (6S)-5-formyl-5,6,7,8-tetrahydrofolate binding site.

This sequence belongs to the TRAFAC class TrmE-Era-EngA-EngB-Septin-like GTPase superfamily. TrmE GTPase family. Homodimer. Heterotetramer of two MnmE and two MnmG subunits. K(+) serves as cofactor.

It localises to the cytoplasm. Its function is as follows. Exhibits a very high intrinsic GTPase hydrolysis rate. Involved in the addition of a carboxymethylaminomethyl (cmnm) group at the wobble position (U34) of certain tRNAs, forming tRNA-cmnm(5)s(2)U34. This is tRNA modification GTPase MnmE from Neisseria meningitidis serogroup B (strain ATCC BAA-335 / MC58).